A 240-amino-acid chain; its full sequence is Ribonuclease HII (240 aa).

Residues 27-226 (GPVAGVDEAG…GETRSLRLED (200 aa)) enclose the RNase H type-2 domain. Residues Asp33, Glu34, and Asp127 each coordinate a divalent metal cation.

Belongs to the RNase HII family. It depends on Mn(2+) as a cofactor. Mg(2+) is required as a cofactor.

Its subcellular location is the cytoplasm. The catalysed reaction is Endonucleolytic cleavage to 5'-phosphomonoester.. In terms of biological role, endonuclease that specifically degrades the RNA of RNA-DNA hybrids. This is Ribonuclease HII from Parafrankia sp. (strain EAN1pec).